A 55-amino-acid chain; its full sequence is uncharacterized protein (55 aa).

This is an uncharacterized protein from Escherichia coli (strain K12).